Consider the following 493-residue polypeptide: Ketol-acid reductoisomerase (NADP(+)) (493 aa).

One can recognise a KARI N-terminal Rossmann domain in the interval Leu-14–Ser-208. NADP(+) contacts are provided by residues Cys-45–Gln-48, Arg-68, Arg-76, Ser-78, and Asp-108–Gln-110. His-132 is an active-site residue. Gly-158 is a binding site for NADP(+). 2 KARI C-terminal knotted domains span residues Ser-209–Ala-345 and Asp-346–Met-486. The Mg(2+) site is built by Asp-217, Glu-221, Glu-390, and Glu-394. Ser-415 contributes to the substrate binding site.

It belongs to the ketol-acid reductoisomerase family. Requires Mg(2+) as cofactor.

It catalyses the reaction (2R)-2,3-dihydroxy-3-methylbutanoate + NADP(+) = (2S)-2-acetolactate + NADPH + H(+). The enzyme catalyses (2R,3R)-2,3-dihydroxy-3-methylpentanoate + NADP(+) = (S)-2-ethyl-2-hydroxy-3-oxobutanoate + NADPH + H(+). It participates in amino-acid biosynthesis; L-isoleucine biosynthesis; L-isoleucine from 2-oxobutanoate: step 2/4. The protein operates within amino-acid biosynthesis; L-valine biosynthesis; L-valine from pyruvate: step 2/4. Functionally, involved in the biosynthesis of branched-chain amino acids (BCAA). Catalyzes an alkyl-migration followed by a ketol-acid reduction of (S)-2-acetolactate (S2AL) to yield (R)-2,3-dihydroxy-isovalerate. In the isomerase reaction, S2AL is rearranged via a Mg-dependent methyl migration to produce 3-hydroxy-3-methyl-2-ketobutyrate (HMKB). In the reductase reaction, this 2-ketoacid undergoes a metal-dependent reduction by NADPH to yield (R)-2,3-dihydroxy-isovalerate. This chain is Ketol-acid reductoisomerase (NADP(+)), found in Mannheimia succiniciproducens (strain KCTC 0769BP / MBEL55E).